Reading from the N-terminus, the 400-residue chain is MADSDSSSEMPAHSPSPSPIPCAKQKPPNTGITISLLEIGSLPTFCCSSFSEPNNNMCPIRKQGKVQKFSNLLKDVKDVLKNIAGFEEKTTDGDPFDDTYIPEDLSELNIRGFDKRNKLRFKDDLFIHFDPERENTMRQEMLFKSHSAKNMVQKFARDLCNSEEKRGCDGVQLNAKRRRTGSVHIRGEYRKLRNNMEQLLQEADHWSKQHNELSELMRSYQECHKEIKDIVDCSRVCSQTQNNNEVPSKQKLEEQVKKLSQDTHSLHLIAALLENECQILQQRVDILRELHLHEAGPGHEKPLQTSGEQDKKCGEQDKKCGEQDKKCGEQDKKCPKLAEAEKMDGSKHTMKTTEGTITRKPKIFRCPNDCLTKKARNNRFNARVAKKSLVGKRRTISSFR.

The interval 1–27 is disordered; that stretch reads MADSDSSSEMPAHSPSPSPIPCAKQKP. Residue Ser-106 is modified to Phosphoserine. The tract at residues 116–127 is helix-loop-helix motif; it reads RNKLRFKDDLFI. Positions 128–193 are basic motif; it reads HFDPERENTM…HIRGEYRKLR (66 aa). Coiled coils occupy residues 182–231 and 268–293; these read SVHI…KDIV and LIAA…LHLH. A Phosphoserine modification is found at Ser-207. Positions 252 to 273 are leucine-zipper; it reads LEEQVKKLSQDTHSLHLIAALL. Positions 295 to 332 are disordered; that stretch reads AGPGHEKPLQTSGEQDKKCGEQDKKCGEQDKKCGEQDK.

In terms of assembly, interacts with PPP1CC isoform gamma-2. In terms of processing, phosphorylated by MAPK1/ERK2 and MAPK3/ERK1.

Its subcellular location is the cytoplasm. It is found in the nucleus. Functionally, transcription factor that binds to the DNA sequence 5'-CANNTG-3'(E box) and the G-box motif. May play an important role in the regulation of cell proliferation and differentiation during spermatogenesis. The protein is Spermatogenic leucine zipper protein 1 (Spz1) of Rattus norvegicus (Rat).